A 132-amino-acid polypeptide reads, in one-letter code: Small ribosomal subunit protein eS24 (132 aa).

Residues 91–132 are disordered; the sequence is LATHGLYEKKKTSRKQRTERQNRMKKVRSIKKASVGAAGKKN. Over residues 96–112 the composition is skewed to basic and acidic residues; it reads LYEKKKTSRKQRTERQN.

Belongs to the eukaryotic ribosomal protein eS24 family. As to quaternary structure, component of the small ribosomal subunit.

It localises to the cytoplasm. Component of the small ribosomal subunit. The ribosome is a large ribonucleoprotein complex responsible for the synthesis of proteins in the cell. Required for processing of pre-rRNA and maturation of 40S ribosomal subunits. The protein is Small ribosomal subunit protein eS24 (rps24) of Oryzias latipes (Japanese rice fish).